The sequence spans 242 residues: 1-(5-phosphoribosyl)-5-[(5-phosphoribosylamino)methylideneamino] imidazole-4-carboxamide isomerase (242 aa).

Catalysis depends on Asp8, which acts as the Proton acceptor. Asp129 serves as the catalytic Proton donor.

Belongs to the HisA/HisF family.

It localises to the cytoplasm. The enzyme catalyses 1-(5-phospho-beta-D-ribosyl)-5-[(5-phospho-beta-D-ribosylamino)methylideneamino]imidazole-4-carboxamide = 5-[(5-phospho-1-deoxy-D-ribulos-1-ylimino)methylamino]-1-(5-phospho-beta-D-ribosyl)imidazole-4-carboxamide. It functions in the pathway amino-acid biosynthesis; L-histidine biosynthesis; L-histidine from 5-phospho-alpha-D-ribose 1-diphosphate: step 4/9. The sequence is that of 1-(5-phosphoribosyl)-5-[(5-phosphoribosylamino)methylideneamino] imidazole-4-carboxamide isomerase from Erythrobacter litoralis (strain HTCC2594).